A 464-amino-acid polypeptide reads, in one-letter code: UDP-glycosyltransferase 76C1 (464 aa).

UDP-alpha-D-glucose is bound by residues Ser279, 338–340 (APQ), 355–363 (HNGWNSTLE), and 377–380 (KWDQ).

The protein belongs to the UDP-glycosyltransferase family.

With respect to regulation, inhibited by olomoucine and 3-isobutyl-1-methylxanthine. Functionally, involved in the N-glucosylation of cytokinins. Catalyzes the formation of both the 7-N and the 9-N-glucosides. This Arabidopsis thaliana (Mouse-ear cress) protein is UDP-glycosyltransferase 76C1 (UGT76C1).